The primary structure comprises 167 residues: Small ribosomal subunit protein uS5 (167 aa).

An S5 DRBM domain is found at 12-75 (LQEKLITVNR…EQARRNMITI (64 aa)).

It belongs to the universal ribosomal protein uS5 family. As to quaternary structure, part of the 30S ribosomal subunit. Contacts proteins S4 and S8.

In terms of biological role, with S4 and S12 plays an important role in translational accuracy. Located at the back of the 30S subunit body where it stabilizes the conformation of the head with respect to the body. This chain is Small ribosomal subunit protein uS5, found in Buchnera aphidicola subsp. Acyrthosiphon pisum (strain APS) (Acyrthosiphon pisum symbiotic bacterium).